We begin with the raw amino-acid sequence, 316 residues long: ATP synthase gamma chain (316 aa).

The protein belongs to the ATPase gamma chain family. F-type ATPases have 2 components, CF(1) - the catalytic core - and CF(0) - the membrane proton channel. CF(1) has five subunits: alpha(3), beta(3), gamma(1), delta(1), epsilon(1). CF(0) has three main subunits: a, b and c.

Its subcellular location is the cellular thylakoid membrane. Functionally, produces ATP from ADP in the presence of a proton gradient across the membrane. The gamma chain is believed to be important in regulating ATPase activity and the flow of protons through the CF(0) complex. The sequence is that of ATP synthase gamma chain from Prochlorococcus marinus (strain MIT 9312).